Reading from the N-terminus, the 362-residue chain is Probable dual-specificity RNA methyltransferase RlmN (362 aa).

The active-site Proton acceptor is E91. The Radical SAM core domain occupies 97 to 329 (QHYGLSVCVT…KKNGVNCVVR (233 aa)). A disulfide bridge links C104 with C340. Positions 111, 115, and 118 each coordinate [4Fe-4S] cluster. Residues 163–164 (GE), S195, 218–220 (SLH), and N296 each bind S-adenosyl-L-methionine. C340 functions as the S-methylcysteine intermediate in the catalytic mechanism.

The protein belongs to the radical SAM superfamily. RlmN family. Requires [4Fe-4S] cluster as cofactor.

The protein resides in the cytoplasm. The catalysed reaction is adenosine(2503) in 23S rRNA + 2 reduced [2Fe-2S]-[ferredoxin] + 2 S-adenosyl-L-methionine = 2-methyladenosine(2503) in 23S rRNA + 5'-deoxyadenosine + L-methionine + 2 oxidized [2Fe-2S]-[ferredoxin] + S-adenosyl-L-homocysteine. It catalyses the reaction adenosine(37) in tRNA + 2 reduced [2Fe-2S]-[ferredoxin] + 2 S-adenosyl-L-methionine = 2-methyladenosine(37) in tRNA + 5'-deoxyadenosine + L-methionine + 2 oxidized [2Fe-2S]-[ferredoxin] + S-adenosyl-L-homocysteine. Specifically methylates position 2 of adenine 2503 in 23S rRNA and position 2 of adenine 37 in tRNAs. The protein is Probable dual-specificity RNA methyltransferase RlmN of Streptococcus gordonii (strain Challis / ATCC 35105 / BCRC 15272 / CH1 / DL1 / V288).